Here is a 125-residue protein sequence, read N- to C-terminus: MADLKALAESIVGLTLLEAQELKTILKDEYGIEPAAGGAVMVAAGGDAAGGAAEEEKTEFDVVLKNAGASKINVIKEVRGITGLGLKEAKELVEAGGKIKEGVDKAEAEDIKGKLEAAGAEVELA.

This sequence belongs to the bacterial ribosomal protein bL12 family. In terms of assembly, homodimer. Part of the ribosomal stalk of the 50S ribosomal subunit. Forms a multimeric L10(L12)X complex, where L10 forms an elongated spine to which 2 to 4 L12 dimers bind in a sequential fashion. Binds GTP-bound translation factors.

Forms part of the ribosomal stalk which helps the ribosome interact with GTP-bound translation factors. Is thus essential for accurate translation. The sequence is that of Large ribosomal subunit protein bL12 from Ruegeria sp. (strain TM1040) (Silicibacter sp.).